We begin with the raw amino-acid sequence, 238 residues long: Uracil-DNA glycosylase (238 aa).

The active-site Proton acceptor is the Asp-72.

Belongs to the uracil-DNA glycosylase (UDG) superfamily. UNG family.

It is found in the cytoplasm. It carries out the reaction Hydrolyzes single-stranded DNA or mismatched double-stranded DNA and polynucleotides, releasing free uracil.. Functionally, excises uracil residues from the DNA which can arise as a result of misincorporation of dUMP residues by DNA polymerase or due to deamination of cytosine. The sequence is that of Uracil-DNA glycosylase from Chromobacterium violaceum (strain ATCC 12472 / DSM 30191 / JCM 1249 / CCUG 213 / NBRC 12614 / NCIMB 9131 / NCTC 9757 / MK).